The following is a 140-amino-acid chain: Relaxin-3 (140 aa).

The N-terminal stretch at 1-26 is a signal peptide; that stretch reads MAKRPLLLLLLAVWVLAGELWLRTEA. Disulfide bonds link cysteine 36–cysteine 127, cysteine 48–cysteine 140, and cysteine 126–cysteine 131. A propeptide spans 56–116 (connecting peptide); sequence SDMLAHEALG…RTPGALRGSR (61 aa).

The protein belongs to the insulin family. As to quaternary structure, heterodimer of a B chain and an A chain linked by two disulfide bonds.

Its subcellular location is the secreted. May play a role in neuropeptide signaling processes. Ligand for LGR7, RXFP3 and RXFP4. The sequence is that of Relaxin-3 (RLN3) from Sus scrofa (Pig).